Consider the following 552-residue polypeptide: Urocanate hydratase (552 aa).

NAD(+)-binding positions include 49 to 50 (GG), glutamine 127, 173 to 175 (GMG), aspartate 193, 239 to 240 (NA), 260 to 264 (QTSAH), 270 to 271 (YV), and tyrosine 319. Cysteine 407 is a catalytic residue. An NAD(+)-binding site is contributed by glycine 489.

The protein belongs to the urocanase family. The cofactor is NAD(+).

The protein localises to the cytoplasm. It carries out the reaction 4-imidazolone-5-propanoate = trans-urocanate + H2O. Its pathway is amino-acid degradation; L-histidine degradation into L-glutamate; N-formimidoyl-L-glutamate from L-histidine: step 2/3. Functionally, catalyzes the conversion of urocanate to 4-imidazolone-5-propionate. This is Urocanate hydratase from Bacillus cytotoxicus (strain DSM 22905 / CIP 110041 / 391-98 / NVH 391-98).